The sequence spans 150 residues: SsrA-binding protein (150 aa).

The protein belongs to the SmpB family.

It localises to the cytoplasm. Functionally, required for rescue of stalled ribosomes mediated by trans-translation. Binds to transfer-messenger RNA (tmRNA), required for stable association of tmRNA with ribosomes. tmRNA and SmpB together mimic tRNA shape, replacing the anticodon stem-loop with SmpB. tmRNA is encoded by the ssrA gene; the 2 termini fold to resemble tRNA(Ala) and it encodes a 'tag peptide', a short internal open reading frame. During trans-translation Ala-aminoacylated tmRNA acts like a tRNA, entering the A-site of stalled ribosomes, displacing the stalled mRNA. The ribosome then switches to translate the ORF on the tmRNA; the nascent peptide is terminated with the 'tag peptide' encoded by the tmRNA and targeted for degradation. The ribosome is freed to recommence translation, which seems to be the essential function of trans-translation. In Polynucleobacter asymbioticus (strain DSM 18221 / CIP 109841 / QLW-P1DMWA-1) (Polynucleobacter necessarius subsp. asymbioticus), this protein is SsrA-binding protein.